The chain runs to 285 residues: Probable endonuclease 4 (285 aa).

Residues H67, H107, E144, D178, H181, H215, D228, H230, and E260 each contribute to the Zn(2+) site.

The protein belongs to the AP endonuclease 2 family. Zn(2+) is required as a cofactor.

The catalysed reaction is Endonucleolytic cleavage to 5'-phosphooligonucleotide end-products.. Functionally, endonuclease IV plays a role in DNA repair. It cleaves phosphodiester bonds at apurinic or apyrimidinic (AP) sites, generating a 3'-hydroxyl group and a 5'-terminal sugar phosphate. This is Probable endonuclease 4 from Chloroflexus aurantiacus (strain ATCC 29366 / DSM 635 / J-10-fl).